The sequence spans 577 residues: MYRFASNLASKARIAQNARQVSSRMSWSRNYAAKEIKFGVEARALMLKGVEDLADAVKVTMGPKGRNVVIEQSWGAPKVTKDGVTVAKSIEFKDKIKNVGASLVKQVANATNDVAGDGTTCATVLTRAIFAEGCKSVAAGMNAMDLRRGISMAVDAVVTNLKSKARMISTSEEIAQVGTISANGEREIGELIAKAMEKVGKEGVITIQDGKTLFNELEVVEGMKLDRGYTSPYFITNQKTQKCELDDPLILIHEKKISSINSIVKVLELALKRQRPLLIVSEDVESDALATLILNKLRAGIKVCAIKAPGFGENRKANLQDLAALTGGEVITDELGMNLEKVDLSMLGTCKKVTVSKDDTVILDGAGDKKGIEERCEQIRSAIELSTSDYDKEKLQERLAKLSGGVAVLKIGGASEAEVGEKKDRVTDALNATKAAVEEGILPGGGVALLYAARELEKLPTANFDQKIGVQIIQNALKTPVYTIASNAGVEGAVIVGKLLEQDNPDLGYDAAKGEYVDMVKAGIIDPLKVIRTALVDAASVSSLLTTTEAVVVDLPKDESESGAAGAGMGGMGGMDY.

Residues 1–31 (MYRFASNLASKARIAQNARQVSSRMSWSRNY) constitute a mitochondrion transit peptide. At Ser151 the chain carries Phosphoserine.

Belongs to the chaperonin (HSP60) family.

The protein localises to the mitochondrion. Its function is as follows. Implicated in mitochondrial protein import and macromolecular assembly. May facilitate the correct folding of imported proteins. May also prevent misfolding and promote the refolding and proper assembly of unfolded polypeptides generated under stress conditions in the mitochondrial matrix. This is Chaperonin CPN60, mitochondrial (CPN60) from Arabidopsis thaliana (Mouse-ear cress).